Reading from the N-terminus, the 307-residue chain is MPKKCRHLLQTSDLSLDEIKLLLKKASVYANDFNAVSLETKEKMHNKIIVALFFENSTRTVSSFEIASLRLGAKIVKLNMQTSSASKGETLTDTFKNIHAMQPDAIITRHAFSSAPFKLAEFSQCPLINAGSGVSAHPTQALLDLLTLYQHFGSLENLKGKKIAFIGDVKNSRVANSNIKLLQRLGLEIMLCAPSSMLPTTSLKTTHNIEEAIAFADILMSLRTQTERHNAPIFASLKDYGNAYCITQQRLKAHAKNKEVIILHPGPVHRDIDIESAVLEDERSKVLEQVKNGVAMRMAVLEFLLLD.

The carbamoyl phosphate site is built by R59 and T60. An L-aspartate-binding site is contributed by K87. Positions 109, 137, and 140 each coordinate carbamoyl phosphate. Positions 173 and 223 each coordinate L-aspartate. Residues G266 and P267 each contribute to the carbamoyl phosphate site.

The protein belongs to the aspartate/ornithine carbamoyltransferase superfamily. ATCase family. In terms of assembly, heterododecamer (2C3:3R2) of six catalytic PyrB chains organized as two trimers (C3), and six regulatory PyrI chains organized as three dimers (R2).

It catalyses the reaction carbamoyl phosphate + L-aspartate = N-carbamoyl-L-aspartate + phosphate + H(+). It participates in pyrimidine metabolism; UMP biosynthesis via de novo pathway; (S)-dihydroorotate from bicarbonate: step 2/3. Catalyzes the condensation of carbamoyl phosphate and aspartate to form carbamoyl aspartate and inorganic phosphate, the committed step in the de novo pyrimidine nucleotide biosynthesis pathway. This chain is Aspartate carbamoyltransferase catalytic subunit, found in Helicobacter pylori (strain HPAG1).